Consider the following 466-residue polypeptide: 3-isopropylmalate dehydratase large subunit (466 aa).

Residues Cys-346, Cys-406, and Cys-409 each coordinate [4Fe-4S] cluster.

This sequence belongs to the aconitase/IPM isomerase family. LeuC type 1 subfamily. In terms of assembly, heterodimer of LeuC and LeuD. [4Fe-4S] cluster is required as a cofactor.

It carries out the reaction (2R,3S)-3-isopropylmalate = (2S)-2-isopropylmalate. It participates in amino-acid biosynthesis; L-leucine biosynthesis; L-leucine from 3-methyl-2-oxobutanoate: step 2/4. Catalyzes the isomerization between 2-isopropylmalate and 3-isopropylmalate, via the formation of 2-isopropylmaleate. The sequence is that of 3-isopropylmalate dehydratase large subunit from Alteromonas mediterranea (strain DSM 17117 / CIP 110805 / LMG 28347 / Deep ecotype).